A 107-amino-acid polypeptide reads, in one-letter code: uncharacterized protein (107 aa).

Residues 25–42 (LSLCSVLLSWLICAMCLW) traverse the membrane as a helical segment.

The protein localises to the host membrane. This is an uncharacterized protein from Galliformes (FAdV-1).